The sequence spans 193 residues: D-alanyl-D-alanine dipeptidase (193 aa).

The Zn(2+) site is built by H98 and D105. E162 functions as the Proton donor/acceptor in the catalytic mechanism. H165 is a Zn(2+) binding site.

This sequence belongs to the peptidase M15D family. Requires Zn(2+) as cofactor.

It localises to the cytoplasm. It catalyses the reaction D-alanyl-D-alanine + H2O = 2 D-alanine. Catalyzes hydrolysis of the D-alanyl-D-alanine dipeptide. May have a role in cell-wall turnover. The chain is D-alanyl-D-alanine dipeptidase from Escherichia coli (strain K12).